Consider the following 35-residue polypeptide: MSDINATRLPIVGILGLPCIGDDVNSTLTHGEDLC.

Positions 1-10 (MSDINATRLP) are excised as a propeptide. Residues 11–18 (IVGILGLP) constitute a cross-link (cyclopeptide (Ile-Pro)). A propeptide spanning residues 19-35 (CIGDDVNSTLTHGEDLC) is cleaved from the precursor.

This sequence belongs to the MSDIN fungal toxin family. Post-translationally, processed by the macrocyclase-peptidase enzyme POPB to yield a cyclic decapeptide. POPB first removes 10 residues from the N-terminus. Conformational trapping of the remaining peptide forces the enzyme to release this intermediate rather than proceed to macrocyclization. The enzyme rebinds the remaining peptide in a different conformation and catalyzes macrocyclization of the N-terminal 8 residues.

Cyclic octapeptide that belongs to the MSDIN-like toxin family responsible for a large number of food poisoning cases and deaths. Cycloaminide E is structurally related to other cycloamanides that are non-toxic to mammals but show immunosuppressive activity. The polypeptide is Cycloamanide F proprotein (Amanita phalloides (Death cap)).